The following is a 112-amino-acid chain: Nucleoid-associated protein FTF0810c (112 aa).

The segment at Met-1–Glu-27 is disordered. The segment covering Glu-17 to Glu-27 has biased composition (basic and acidic residues).

The protein belongs to the YbaB/EbfC family. In terms of assembly, homodimer.

It localises to the cytoplasm. Its subcellular location is the nucleoid. Its function is as follows. Binds to DNA and alters its conformation. May be involved in regulation of gene expression, nucleoid organization and DNA protection. This Francisella tularensis subsp. tularensis (strain FSC 198) protein is Nucleoid-associated protein FTF0810c.